The primary structure comprises 670 residues: UvrABC system protein B (670 aa).

In terms of domain architecture, Helicase ATP-binding spans 26–183 (NGLKSGLAFQ…QRLVDLQYNR (158 aa)). 39–46 (GVTGSGKT) serves as a coordination point for ATP. Positions 92–115 (YYDYYQPEAYVPSSDSFIEKDAAI) match the Beta-hairpin motif. The Helicase C-terminal domain occupies 431 to 597 (QVDDLLSEIN…GLSKQVNDVM (167 aa)). A UVR domain is found at 630–665 (LKQIALSEKQMFACAKNLEFEKAALFRDEVTKLHEQ).

The protein belongs to the UvrB family. Forms a heterotetramer with UvrA during the search for lesions. Interacts with UvrC in an incision complex.

The protein resides in the cytoplasm. Functionally, the UvrABC repair system catalyzes the recognition and processing of DNA lesions. A damage recognition complex composed of 2 UvrA and 2 UvrB subunits scans DNA for abnormalities. Upon binding of the UvrA(2)B(2) complex to a putative damaged site, the DNA wraps around one UvrB monomer. DNA wrap is dependent on ATP binding by UvrB and probably causes local melting of the DNA helix, facilitating insertion of UvrB beta-hairpin between the DNA strands. Then UvrB probes one DNA strand for the presence of a lesion. If a lesion is found the UvrA subunits dissociate and the UvrB-DNA preincision complex is formed. This complex is subsequently bound by UvrC and the second UvrB is released. If no lesion is found, the DNA wraps around the other UvrB subunit that will check the other stand for damage. The chain is UvrABC system protein B from Psychromonas ingrahamii (strain DSM 17664 / CCUG 51855 / 37).